A 272-amino-acid polypeptide reads, in one-letter code: Orotidine 5'-phosphate decarboxylase (272 aa).

Catalysis depends on Lys-95, which acts as the Proton donor.

The protein belongs to the OMP decarboxylase family. Type 2 subfamily.

The enzyme catalyses orotidine 5'-phosphate + H(+) = UMP + CO2. Its pathway is pyrimidine metabolism; UMP biosynthesis via de novo pathway; UMP from orotate: step 2/2. This Bordetella avium (strain 197N) protein is Orotidine 5'-phosphate decarboxylase.